Here is a 363-residue protein sequence, read N- to C-terminus: Protein disulfide-isomerase 1 (363 aa).

Positions 1 to 20 are cleaved as a signal peptide; the sequence is MKILLFVTLIALAFVALCSA. 2 Thioredoxin domains span residues 21–132 and 133–285; these read EGNV…NHAK and TNVK…AAAE. Residues cysteine 51, cysteine 54, cysteine 172, and cysteine 175 each act as nucleophile in the active site. 2 disulfide bridges follow: cysteine 51-cysteine 54 and cysteine 172-cysteine 175.

Belongs to the protein disulfide isomerase family.

The protein localises to the endoplasmic reticulum lumen. The enzyme catalyses Catalyzes the rearrangement of -S-S- bonds in proteins.. Participates in the folding of proteins containing disulfide bonds, may be involved in glycosylation, prolyl hydroxylation and triglyceride transfer. The polypeptide is Protein disulfide-isomerase 1 (pdi1) (Dictyostelium discoideum (Social amoeba)).